A 413-amino-acid polypeptide reads, in one-letter code: Methylaspartate ammonia-lyase (413 aa).

Residue Gln172 coordinates (2S,3S)-3-methyl-L-aspartate. Asp238, Glu273, and Asp307 together coordinate Mg(2+). A (2S,3S)-3-methyl-L-aspartate-binding site is contributed by Gln329. Lys331 serves as the catalytic Proton acceptor. (2S,3S)-3-methyl-L-aspartate is bound by residues Thr360 to Cys361 and Cys361.

The protein belongs to the methylaspartate ammonia-lyase family. As to quaternary structure, homodimer. The cofactor is Mg(2+).

It catalyses the reaction (2S,3S)-3-methyl-L-aspartate = mesaconate + NH4(+). It functions in the pathway amino-acid degradation; L-glutamate degradation via mesaconate pathway; acetate and pyruvate from L-glutamate: step 2/4. Its activity is regulated as follows. Inhibited by calcium ions. Involved in the methylaspartate cycle. Catalyzes the formation of the alpha,beta-unsaturated bond by the reversible anti elimination of ammonia from L-threo-beta-methylaspartate (L-threo-(2S,3S)-3-methylaspartate) to give mesaconate. It can also use L-erythro-beta-methylaspartate (L-erythro-(2S,3R)-3-methylaspartate), L-aspartate, fumarate and ethylfumarate as substrates. The protein is Methylaspartate ammonia-lyase of Clostridium tetanomorphum.